Consider the following 551-residue polypeptide: Protein GZF3 (551 aa).

Residues 17–43 (DNVFEPKSSENLNSLNQSEEEGHIGRW) form a disordered region. The segment at 131 to 155 (CKNCLTSTTPLWRRDEHGAMLCNAC) adopts a GATA-type zinc-finger fold. 3 disordered regions span residues 212–260 (GRKA…SATK), 379–400 (LAPT…QIRS), and 467–490 (SISN…AKDL). Residues 228–239 (SQLLMGTSSTAK) are compositionally biased toward polar residues. Basic and acidic residues predominate over residues 244–254 (PKTESKERSDS). Over residues 388 to 400 (DSNPSEVPNQIRS) the composition is skewed to polar residues. Over residues 467-477 (SISNSVSSSDV) the composition is skewed to low complexity. Residues 478 to 490 (SGRKFENHPAKDL) show a composition bias toward basic and acidic residues.

It is found in the nucleus. The polypeptide is Protein GZF3 (GZF3) (Saccharomyces cerevisiae (strain ATCC 204508 / S288c) (Baker's yeast)).